Here is a 285-residue protein sequence, read N- to C-terminus: UPF0354 protein SA1564 (285 aa).

This sequence belongs to the UPF0354 family.

This chain is UPF0354 protein SA1564, found in Staphylococcus aureus (strain N315).